The chain runs to 239 residues: Probable fimbrial chaperone YehC (239 aa).

Residues 1–31 (MAAIPWRPFNLRGIKMKGLLSLLIFSMVLPA) form the signal peptide.

It belongs to the periplasmic pilus chaperone family.

The protein resides in the periplasm. Functionally, part of the yehABCD fimbrial operon. Could contribute to adhesion to various surfaces in specific environmental niches. The protein is Probable fimbrial chaperone YehC (yehC) of Escherichia coli (strain K12).